The chain runs to 503 residues: ATP synthase subunit alpha (503 aa).

G169–T176 contributes to the ATP binding site.

This sequence belongs to the ATPase alpha/beta chains family. F-type ATPases have 2 components, CF(1) - the catalytic core - and CF(0) - the membrane proton channel. CF(1) has five subunits: alpha(3), beta(3), gamma(1), delta(1), epsilon(1). CF(0) has three main subunits: a(1), b(2) and c(9-12). The alpha and beta chains form an alternating ring which encloses part of the gamma chain. CF(1) is attached to CF(0) by a central stalk formed by the gamma and epsilon chains, while a peripheral stalk is formed by the delta and b chains.

The protein resides in the cell membrane. The catalysed reaction is ATP + H2O + 4 H(+)(in) = ADP + phosphate + 5 H(+)(out). Functionally, produces ATP from ADP in the presence of a proton gradient across the membrane. The alpha chain is a regulatory subunit. The polypeptide is ATP synthase subunit alpha (Lactobacillus johnsonii (strain CNCM I-12250 / La1 / NCC 533)).